The sequence spans 271 residues: MVATVVNVQVKNEEKIETAPKKVVFDTKNLNLWYGEDHALKDINLSIHENEVTAIIGPSGCGKSTYLKTLNRMVELVPIVRTTGVIEYRERNIFDKSYPVEELRTHVGMVFQKPNPFPKSIYENVTYGPKIHGIRDKKTLDEIVEKSLRGAAIWDELKDRLHDNAYGLSGGQQQRLCIARCLAIEPDVILMDEPTSALDPISTLKVEELIQELKKDFSIVIVTHNMQQAARISDKTAFFLSGEVVEYTDTNKLFTTPSDKRTEDYITGRFG.

The region spanning 25–266 is the ABC transporter domain; sequence FDTKNLNLWY…PSDKRTEDYI (242 aa). 57-64 contacts ATP; that stretch reads GPSGCGKS.

The protein belongs to the ABC transporter superfamily. Phosphate importer (TC 3.A.1.7) family. The complex is composed of two ATP-binding proteins (PstB), two transmembrane proteins (PstC and PstA) and a solute-binding protein (PstS).

It is found in the cell membrane. The catalysed reaction is phosphate(out) + ATP + H2O = ADP + 2 phosphate(in) + H(+). Functionally, part of the ABC transporter complex PstSACB involved in phosphate import. Responsible for energy coupling to the transport system. The chain is Phosphate import ATP-binding protein PstB from Bacillus cereus (strain ATCC 14579 / DSM 31 / CCUG 7414 / JCM 2152 / NBRC 15305 / NCIMB 9373 / NCTC 2599 / NRRL B-3711).